A 165-amino-acid chain; its full sequence is Disulfide bond formation protein B (165 aa).

The Cytoplasmic segment spans residues 1 to 16 (MTILNSLNQFSKGRLS). Residues 17-33 (WLLLLLFVVFFEACALY) traverse the membrane as a helical segment. Over 34 to 51 (FQHVMMLAPCVMCIYERV) the chain is Periplasmic. A disulfide bridge links Cys-43 with Cys-46. Residues 52–67 (AMMGVGVAAIVGLMAP) form a helical membrane-spanning segment. Residues 68 to 74 (NNPIFRW) are Cytoplasmic-facing. Residues 75–92 (LGLIGWGLSSYKGLLLAQ) form a helical membrane-spanning segment. Residues 93 to 147 (QHVDYQFNPSPFATCDLFVTFPSWRPLNQWAPWIFEAYGDCSKIVWQFLDLSMPQ) lie on the Periplasmic side of the membrane. A disulfide bond links Cys-107 and Cys-133. A helical transmembrane segment spans residues 148 to 165 (WLVVIFAGNLIALALIVI).

Belongs to the DsbB family.

Its subcellular location is the cell inner membrane. In terms of biological role, required for disulfide bond formation in some periplasmic proteins. Acts by oxidizing the DsbA protein. In Vibrio alginolyticus, this protein is Disulfide bond formation protein B.